Consider the following 343-residue polypeptide: UBP1-associated proteins 1A (343 aa).

The interval 1–61 (MAKTLDKSKK…SESDNEFDPE (61 aa)) is disordered. Positions 28-49 (NKQQQQPESSTPYSSSSSSSDS) are enriched in low complexity. Acidic residues predominate over residues 50–61 (SDSESDNEFDPE). One can recognise an RRM domain in the interval 104 to 181 (RKIFVYGLPW…RTATCQLASM (78 aa)). The tract at residues 312-343 (STYPDSDAGGKRGTGKDSDAGGSSFHGYSNYS) is disordered. Residues 319–330 (AGGKRGTGKDSD) are compositionally biased toward basic and acidic residues.

As to quaternary structure, interacts with UBA1A, UBA2A, UBP1A, UBP1B and UBP1C.

The protein localises to the nucleus. Functionally, acts as a component of a complex regulating the turnover of mRNAs in the nucleus. Binds with high affinity to RNA molecules that contain U-rich sequences in 3'-UTRs. May function in complex with UBP1 and contribute to the stabilization of mRNAs in the nucleus. However, unlike UBP1, UBA1A does not stimulate pre-mRNA splicing. In Arabidopsis thaliana (Mouse-ear cress), this protein is UBP1-associated proteins 1A (UBA1A).